Consider the following 660-residue polypeptide: Protein SCARECROW 2 (660 aa).

Disordered regions lie at residues 1–33 (MGSS…ITSL) and 190–286 (SDPA…KQRD). Over residues 192 to 229 (PAPPPPPPSHPALLPPDATAPPPPPTSVAALPPPPPAQ) the composition is skewed to pro residues. Residues 259-272 (AAAAAAAAAAAAAA) are compositionally biased toward low complexity. A coiled-coil region spans residues 262-289 (AAAAAAAAAAAAKERKEEQRRKQRDEEG). The segment covering 273-286 (AKERKEEQRRKQRD) has biased composition (basic and acidic residues). Positions 283–653 (KQRDEEGLHL…LCLLTASAWR (371 aa)) constitute a GRAS domain. Residues 290–354 (LHLLTLLLQC…VSSCLGLYAP (65 aa)) are leucine repeat I (LRI). A LxCxE motif motif is present at residues 297–301 (LQCAE). Positions 373–438 (FQVFNGISPF…GGPPRVRLTG (66 aa)) are VHIID. The short motif at 404–408 (VHIID) is the VHIID element. The leucine repeat II (LRII) stretch occupies residues 448 to 480 (ATGKRLSDFADTLGLPFEFCPVADKAGNLDPEK). The PFYRE stretch occupies residues 489 to 576 (VAVHWLRHSL…QQLLSREIRN (88 aa)). The segment at 579–653 (AVGGPARTGD…LCLLTASAWR (75 aa)) is SAW.

The protein belongs to the GRAS family.

The protein localises to the cytoplasm. Probable transcription factor involved in asmmetric cell division in the cortex/endodermis progenitor cell and in the process of stomata and ligule formation in leaves. The protein is Protein SCARECROW 2 (SCR2) of Oryza sativa subsp. indica (Rice).